A 453-amino-acid chain; its full sequence is GTPase Der (453 aa).

EngA-type G domains lie at 3–167 and 187–360; these read FTLA…PAQT and IKVA…AVWN. Residues 9–16, 56–60, 119–122, 193–200, 240–244, and 305–308 each bind GTP; these read GRPNVGKS, DTAGL, NKSE, GRPNAGKS, and NKSD. The KH-like domain maps to 361–445; the sequence is TRIPTNPLNR…PIRLTLREKG (85 aa).

It belongs to the TRAFAC class TrmE-Era-EngA-EngB-Septin-like GTPase superfamily. EngA (Der) GTPase family. Associates with the 50S ribosomal subunit.

Its function is as follows. GTPase that plays an essential role in the late steps of ribosome biogenesis. The sequence is that of GTPase Der from Azorhizobium caulinodans (strain ATCC 43989 / DSM 5975 / JCM 20966 / LMG 6465 / NBRC 14845 / NCIMB 13405 / ORS 571).